A 258-amino-acid polypeptide reads, in one-letter code: Phosphate import ATP-binding protein PstB (258 aa).

Residues 5-247 enclose the ABC transporter domain; sequence IETKDLDIYY…ERIFSNPKEK (243 aa). 37–44 is a binding site for ATP; that stretch reads GPSGCGKS.

Belongs to the ABC transporter superfamily. Phosphate importer (TC 3.A.1.7) family. In terms of assembly, the complex is composed of two ATP-binding proteins (PstB), two transmembrane proteins (PstC and PstA) and a solute-binding protein (PstS).

The protein localises to the cell membrane. It catalyses the reaction phosphate(out) + ATP + H2O = ADP + 2 phosphate(in) + H(+). Its function is as follows. Part of the ABC transporter complex PstSACB involved in phosphate import. Responsible for energy coupling to the transport system. This is Phosphate import ATP-binding protein PstB from Cutibacterium acnes (strain DSM 16379 / KPA171202) (Propionibacterium acnes).